Reading from the N-terminus, the 91-residue chain is Small ribosomal subunit protein bS18 (91 aa).

Residues 1–14 (MTNQNQSQTQTTQT) show a composition bias toward low complexity. The disordered stretch occupies residues 1-24 (MTNQNQSQTQTTQTVEKVSSRQKK).

This sequence belongs to the bacterial ribosomal protein bS18 family. As to quaternary structure, part of the 30S ribosomal subunit. Forms a tight heterodimer with protein bS6.

In terms of biological role, binds as a heterodimer with protein bS6 to the central domain of the 16S rRNA, where it helps stabilize the platform of the 30S subunit. In Caldicellulosiruptor saccharolyticus (strain ATCC 43494 / DSM 8903 / Tp8T 6331), this protein is Small ribosomal subunit protein bS18.